The following is a 67-amino-acid chain: MFFALCVALSGREVNKTRRTVNGVDHKDFFRDGKVGDWKNHLSVTLETENKIDMTIKEKFQGSGTQD.

31–33 is a binding site for 3'-phosphoadenylyl sulfate; it reads RDG.

This sequence belongs to the sulfotransferase 1 family.

Its subcellular location is the cytoplasm. Its function is as follows. Sulfotransferase that utilizes 3'-phospho-5'-adenylyl sulfate (PAPS) as sulfonate donor. This Arabidopsis thaliana (Mouse-ear cress) protein is Putative cytosolic sulfotransferase 2 (SOT2).